The primary structure comprises 507 residues: ATP synthase subunit alpha, chloroplastic (507 aa).

Residue 170 to 177 (GDRQTGKT) coordinates ATP.

This sequence belongs to the ATPase alpha/beta chains family. As to quaternary structure, F-type ATPases have 2 components, CF(1) - the catalytic core - and CF(0) - the membrane proton channel. CF(1) has five subunits: alpha(3), beta(3), gamma(1), delta(1), epsilon(1). CF(0) has four main subunits: a, b, b' and c.

It localises to the plastid. It is found in the chloroplast thylakoid membrane. It catalyses the reaction ATP + H2O + 4 H(+)(in) = ADP + phosphate + 5 H(+)(out). Its function is as follows. Produces ATP from ADP in the presence of a proton gradient across the membrane. The alpha chain is a regulatory subunit. The chain is ATP synthase subunit alpha, chloroplastic from Oryza nivara (Indian wild rice).